Consider the following 370-residue polypeptide: ATP synthase gamma chain, chloroplastic (370 aa).

Residues 1 to 54 (MRSFCIAALLAVASAFTTQPTSFTVKTANVGERASGVFPEQSSAHRTRKATIVM) constitute a chloroplast transit peptide. The active site involves Cys-145.

This sequence belongs to the ATPase gamma chain family. As to quaternary structure, F-type ATPases have 2 components, CF(1) - the catalytic core - and CF(0) - the membrane proton channel. CF(1) has five subunits: alpha(3), beta(3), gamma(1), delta(1), epsilon(1). CF(0) has four main subunits: a, b, b' and c.

Its subcellular location is the plastid. It localises to the chloroplast thylakoid membrane. In terms of biological role, produces ATP from ADP in the presence of a proton gradient across the membrane. The gamma chain is believed to be important in regulating ATPase activity and the flow of protons through the CF(0) complex. The protein is ATP synthase gamma chain, chloroplastic (ATPC) of Phaeodactylum tricornutum (Diatom).